The following is a 338-amino-acid chain: Lipoate-protein ligase A (338 aa).

The BPL/LPL catalytic domain maps to 29-216; the sequence is PATQRVLFLW…AFFAHYGERV (188 aa). Residues R71, 76–79, and K134 each bind ATP; that span reads GAVF. A (R)-lipoate-binding site is contributed by K134.

Belongs to the LplA family. Monomer.

Its subcellular location is the cytoplasm. The catalysed reaction is L-lysyl-[lipoyl-carrier protein] + (R)-lipoate + ATP = N(6)-[(R)-lipoyl]-L-lysyl-[lipoyl-carrier protein] + AMP + diphosphate + H(+). It functions in the pathway protein modification; protein lipoylation via exogenous pathway; protein N(6)-(lipoyl)lysine from lipoate: step 1/2. The protein operates within protein modification; protein lipoylation via exogenous pathway; protein N(6)-(lipoyl)lysine from lipoate: step 2/2. In terms of biological role, catalyzes both the ATP-dependent activation of exogenously supplied lipoate to lipoyl-AMP and the transfer of the activated lipoyl onto the lipoyl domains of lipoate-dependent enzymes. This is Lipoate-protein ligase A from Salmonella dublin (strain CT_02021853).